The following is a 207-amino-acid chain: Holliday junction branch migration complex subunit RuvA (207 aa).

The interval 1 to 65 is domain I; that stretch reads MIGRIRGVIL…EDAQLLYGFN (65 aa). The domain II stretch occupies residues 66 to 143; sequence QKQERALFRE…KGLNGDLFEQ (78 aa). The segment at 144–158 is flexible linker; sequence NGDIELPASASSKAP. Residues 159-207 form a domain III region; it reads SAADIEAEASAALIALGYKPQEAAKMISRVATAGADSETLIKEALRAAI.

This sequence belongs to the RuvA family. Homotetramer. Forms an RuvA(8)-RuvB(12)-Holliday junction (HJ) complex. HJ DNA is sandwiched between 2 RuvA tetramers; dsDNA enters through RuvA and exits via RuvB. An RuvB hexamer assembles on each DNA strand where it exits the tetramer. Each RuvB hexamer is contacted by two RuvA subunits (via domain III) on 2 adjacent RuvB subunits; this complex drives branch migration. In the full resolvosome a probable DNA-RuvA(4)-RuvB(12)-RuvC(2) complex forms which resolves the HJ.

It localises to the cytoplasm. In terms of biological role, the RuvA-RuvB-RuvC complex processes Holliday junction (HJ) DNA during genetic recombination and DNA repair, while the RuvA-RuvB complex plays an important role in the rescue of blocked DNA replication forks via replication fork reversal (RFR). RuvA specifically binds to HJ cruciform DNA, conferring on it an open structure. The RuvB hexamer acts as an ATP-dependent pump, pulling dsDNA into and through the RuvAB complex. HJ branch migration allows RuvC to scan DNA until it finds its consensus sequence, where it cleaves and resolves the cruciform DNA. This Proteus mirabilis (strain HI4320) protein is Holliday junction branch migration complex subunit RuvA.